The primary structure comprises 501 residues: Lycopene beta cyclase, chloroplastic (501 aa).

The transit peptide at 1–48 directs the protein to the chloroplast; sequence MDTLLKTPNKLDFFIPQFHGFERLCSNNPYHSRVRLGVKKRAIKIVSS. Val-49 carries the N-acetylvaline modification. 85–113 contacts NAD(+); it reads LAIVGGGPAGLAVAQQVSEAGLSVCSIDP.

This sequence belongs to the lycopene cyclase family.

Its subcellular location is the plastid. The protein localises to the chloroplast. It catalyses the reaction a carotenoid psi-end group = a carotenoid beta-end derivative. It participates in carotenoid biosynthesis; beta-carotene biosynthesis. Its pathway is carotenoid biosynthesis; beta-zeacarotene biosynthesis. Functionally, involved in carotenoid biosynthesis. Catalyzes the double cyclization reaction which converts lycopene to beta-carotene and neurosporene to beta-zeacarotene. Major lycopene beta-cyclase that does not seem to be involved in neoxanthin synthesis. Involved in salt tolerance improvement by increasing synthesis of carotenoids, which impairs reactive oxygen species (ROS) and protects the photosynthetic system under salt stress. The sequence is that of Lycopene beta cyclase, chloroplastic from Arabidopsis thaliana (Mouse-ear cress).